Reading from the N-terminus, the 114-residue chain is DNA-(apurinic or apyrimidinic site) endonuclease (114 aa).

It belongs to the apurinic/apyrimidinic endonuclease family. In terms of assembly, interacts with host Ung; this interaction allows the viral AP endonuclease to localize to newly formed AP sites and cleave them, leading to inhibition of bacterial growth.

In terms of biological role, performs endonucleolytic cleavage at abasic sites, which are generated by the base-excision activity of host Ung. The cleavage generates a 5'-deoxyribose phosphate and 3'-hydroxyl end. The sites are specifically recognized through the formation of a complex with host Ung. The viral endonucleolytic activity damages the host DNA, blocks host DNA replication and induces cell division arrest. This may provide an advantage for the phage and save nucleotides for the viral replication since it specifically targets the host DNA, which possesses more misincorporated uracils than the viral genome. This chain is DNA-(apurinic or apyrimidinic site) endonuclease, found in Escherichia phage T5 (Enterobacteria phage T5).